We begin with the raw amino-acid sequence, 469 residues long: DNA-binding transcriptional regulator NtrC (469 aa).

The region spanning isoleucine 5–isoleucine 119 is the Response regulatory domain. Aspartate 54 is subject to 4-aspartylphosphate. The Sigma-54 factor interaction domain occupies methionine 140–valine 369. ATP-binding positions include glycine 168 to glutamate 175 and alanine 231 to glutamate 240. A DNA-binding region (H-T-H motif) is located at residues lysine 445–lysine 464.

Post-translationally, phosphorylated and dephosphorylated by NtrB.

The protein localises to the cytoplasm. Member of the two-component regulatory system NtrB/NtrC, which controls expression of the nitrogen-regulated (ntr) genes in response to nitrogen limitation. Phosphorylated NtrC binds directly to DNA and stimulates the formation of open promoter-sigma54-RNA polymerase complexes. The sequence is that of DNA-binding transcriptional regulator NtrC (glnG) from Salmonella typhimurium (strain LT2 / SGSC1412 / ATCC 700720).